Consider the following 218-residue polypeptide: NAD(P)H-quinone oxidoreductase subunit I (218 aa).

2 4Fe-4S ferredoxin-type domains span residues 55 to 84 (GRIH…VDWV) and 95 to 124 (RNYS…MTEE). Positions 64, 67, 70, 74, 104, 107, 110, and 114 each coordinate [4Fe-4S] cluster. The interval 168 to 218 (EVQPHGVDPSRPRAGQRPDQVLSSLKQNAGGSAGNEGESATSTNTSKGSAE) is disordered. Polar residues predominate over residues 208 to 218 (TSTNTSKGSAE).

Belongs to the complex I 23 kDa subunit family. In terms of assembly, NDH-1 is composed of at least 11 different subunits. [4Fe-4S] cluster serves as cofactor.

It is found in the cellular thylakoid membrane. The catalysed reaction is a plastoquinone + NADH + (n+1) H(+)(in) = a plastoquinol + NAD(+) + n H(+)(out). It catalyses the reaction a plastoquinone + NADPH + (n+1) H(+)(in) = a plastoquinol + NADP(+) + n H(+)(out). NDH-1 shuttles electrons from an unknown electron donor, via FMN and iron-sulfur (Fe-S) centers, to quinones in the respiratory and/or the photosynthetic chain. The immediate electron acceptor for the enzyme in this species is believed to be plastoquinone. Couples the redox reaction to proton translocation, and thus conserves the redox energy in a proton gradient. The chain is NAD(P)H-quinone oxidoreductase subunit I from Synechococcus sp. (strain WH7803).